The primary structure comprises 696 residues: Methionine--tRNA ligase (696 aa).

Residues Pro12–His22 carry the 'HIGH' region motif. Zn(2+) is bound by residues Cys143, Cys146, Cys156, and Cys159. The short motif at Lys336 to Ser340 is the 'KMSKS' region element. Lys339 is a binding site for ATP. A disordered region spans residues Ser556–Glu580. Residues Asp591 to Lys696 enclose the tRNA-binding domain.

This sequence belongs to the class-I aminoacyl-tRNA synthetase family. MetG type 1 subfamily. In terms of assembly, homodimer. It depends on Zn(2+) as a cofactor.

It localises to the cytoplasm. The catalysed reaction is tRNA(Met) + L-methionine + ATP = L-methionyl-tRNA(Met) + AMP + diphosphate. Its function is as follows. Is required not only for elongation of protein synthesis but also for the initiation of all mRNA translation through initiator tRNA(fMet) aminoacylation. This chain is Methionine--tRNA ligase, found in Dechloromonas aromatica (strain RCB).